The chain runs to 320 residues: Transcription termination/antitermination protein NusG (320 aa).

It belongs to the NusG family.

Its function is as follows. Participates in transcription elongation, termination and antitermination. In Mycoplasma pneumoniae (strain ATCC 29342 / M129 / Subtype 1) (Mycoplasmoides pneumoniae), this protein is Transcription termination/antitermination protein NusG.